Here is a 396-residue protein sequence, read N- to C-terminus: Septu protein PtuA (396 aa).

Its function is as follows. Component of antiviral defense system Septu type I, composed of PtuA and PtuB. Expression of Septu type I in B.subtilis (strain BEST7003) confers resistance to phages SBSphiC and SBSphiJ. May be an ATPase. This Bacillus thuringiensis protein is Septu protein PtuA.